The chain runs to 288 residues: 2-hydroxy-6-oxononadienedioate/2-hydroxy-6-oxononatrienedioate hydrolase (288 aa).

The active-site Proton acceptor is His267.

Belongs to the AB hydrolase superfamily. MhpC family. As to quaternary structure, homodimer.

The enzyme catalyses (2Z,4E)-2-hydroxy-6-oxonona-2,4-dienedioate + H2O = (2Z)-2-hydroxypenta-2,4-dienoate + succinate + H(+). It carries out the reaction (2Z,4E,7E)-2-hydroxy-6-oxonona-2,4,7-trienedioate + H2O = (2Z)-2-hydroxypenta-2,4-dienoate + fumarate + H(+). It functions in the pathway aromatic compound metabolism; 3-phenylpropanoate degradation. Catalyzes the cleavage of the C5-C6 bond of 2-hydroxy-6-oxononadienedioate and 2-hydroxy-6-oxononatrienedioate, a dienol ring fission product of the bacterial meta-cleavage pathway for degradation of phenylpropionic acid. This chain is 2-hydroxy-6-oxononadienedioate/2-hydroxy-6-oxononatrienedioate hydrolase, found in Escherichia coli O81 (strain ED1a).